A 127-amino-acid polypeptide reads, in one-letter code: uncharacterized protein (127 aa).

This is an uncharacterized protein from Escherichia coli (strain K12).